The chain runs to 180 residues: ATP-dependent protease subunit HslV (180 aa).

Thr8 is a catalytic residue. Residues Ser165, Cys168, and Thr171 each contribute to the Na(+) site.

The protein belongs to the peptidase T1B family. HslV subfamily. In terms of assembly, a double ring-shaped homohexamer of HslV is capped on each side by a ring-shaped HslU homohexamer. The assembly of the HslU/HslV complex is dependent on binding of ATP.

The protein resides in the cytoplasm. It catalyses the reaction ATP-dependent cleavage of peptide bonds with broad specificity.. Allosterically activated by HslU binding. Its function is as follows. Protease subunit of a proteasome-like degradation complex believed to be a general protein degrading machinery. This Staphylococcus saprophyticus subsp. saprophyticus (strain ATCC 15305 / DSM 20229 / NCIMB 8711 / NCTC 7292 / S-41) protein is ATP-dependent protease subunit HslV.